The following is a 290-amino-acid chain: Glutaredoxin domain-containing cysteine-rich protein 1 (290 aa).

Positions 127-234 (LQQPSTDLEF…DILTKIERVQ (108 aa)) constitute a Glutaredoxin domain.

The protein belongs to the GRXCR1 family. Expressed at low levels in adult lung, brain and duodenum with moderate levels in testis. Highly expressed in fetal cochlea.

It localises to the cell projection. Its subcellular location is the stereocilium. The protein localises to the microvillus. It is found in the kinocilium. Its function is as follows. May play a role in actin filament architecture in developing stereocilia of sensory cells. This chain is Glutaredoxin domain-containing cysteine-rich protein 1 (GRXCR1), found in Homo sapiens (Human).